A 493-amino-acid chain; its full sequence is MLQGVIDTHQASLRGILATGALVIFVALFLATFQFQVLCLPLINGRKRFELSLTNSKKRYYADAKGFIQSGFSQSKNGFYAITENGRELILAPKFADDIRNDKRFNFHTYREHTMLPNVAGLDLFQLNDLGKKILSHVIGYRLTHNLEWHEVPLRNSLLAVISQQSSRVFLGKKFCRDPTWLKINTDITVLAFRAVQELRVYPNLLRPVVGWFLPACRVLRSEVRKARKIVEPIVQKRRDYKAACLREQTNPEQFLDTIEWAEECAGSQAYDPTVTQLTIALSAMHNTSDFLTQLVFDLCERPNLIEDLRQEIISVRKKHPWGKATIHHLKLMDSVMKESQRLKPIGLVNMRRRAENSVELADGLIIRKGDLLMISSANQWNPAIYPDPDQFDGYRFYNMRQTPDKKNLSHFVSTNVNHIGFGHGRHACPGRFFAAAETKVALCHILLKYDFKLVGEAPPKILAIGSITSANPFAKIAIRRREEEVSLGVSEP.

The chain crosses the membrane as a helical span at residues 15–35 (GILATGALVIFVALFLATFQF). Cys429 lines the heme pocket.

It belongs to the cytochrome P450 family. Heme is required as a cofactor.

It is found in the membrane. Its pathway is secondary metabolite biosynthesis; terpenoid biosynthesis. In terms of biological role, cytochrome P450 monooxygenase; part of the gene cluster that mediates the biosynthesis of 15-deoxyoxalicine B. The first step of the pathway is the synthesis of nicotinyl-CoA from nicotinic acid by the nicotinic acid-CoA ligase olcI. Nicotinyl-CoA is then a substrate of polyketide synthase olcA to produce 4-hydroxy-6-(3-pyridinyl)-2H-pyran-2-one (HPPO) which is further prenylated by the polyprenyl transferase olcH to yield geranylgeranyl-HPPO. Geranylgeranyl pyrophosphate is provided by the cluster-specific geranylgeranyl pyrophosphate synthase olcC. The FAD-dependent monooxygenase olcE catalyzes the epoxidation of geranylgeranyl-HPPO and the terpene cyclase olcD catalyzes the cyclization of the terpenoid component, resulting in the formation of the tricyclic terpene moiety seen in predecaturin E. The cytochrome P450 monooxygenase then catalyzes the allylic oxidation of predecaturin E, which is followed by spirocylization with concomitant loss of one molecule of water to form decaturin E. Decaturin E is the substrate of the cytochrome P450 monooxygenase olcJ which hydroxylates it at the C-29 position to form decaturin F. The short-chain dehydrogenase/reductase olcF may catalyze the oxidation of decaturin F to generate the 29-hydroxyl-27-one intermediate, and subsequent hemiacetal formation probably leads to the formation of decaturin C. The dioxygenase olcK may be a peroxisomal enzyme that catalyzes the hydroxylation of decaturin C into decaturin A once decaturin C is shuttled into the peroxisome by the MFS transporter olcL. Finally the cytochrome P450 monooxygenase olcB catalyzes the oxidative rearrangement to yield 15-deoxyoxalicine B. In the absence of olcJ, decaturin E may be shunted to a pathway in which it is oxidized to a ketone, possibly by olcF, to form decaturin D, which undergoes further allylic oxidation to yield decaturin G. Moreover, in the absence of oclK or oclL, oclB can convert decaturin C into 15-deoxyoxalicine A. In Penicillium canescens, this protein is Cytochrome P450 monooxygenase olcG.